The following is a 183-amino-acid chain: Ribosome-recycling factor (183 aa).

Belongs to the RRF family.

The protein localises to the cytoplasm. Its function is as follows. Responsible for the release of ribosomes from messenger RNA at the termination of protein biosynthesis. May increase the efficiency of translation by recycling ribosomes from one round of translation to another. This Clostridium tetani (strain Massachusetts / E88) protein is Ribosome-recycling factor.